Reading from the N-terminus, the 96-residue chain is DNA-directed RNA polymerase subunit Rpo11 (96 aa).

Belongs to the archaeal Rpo11/eukaryotic RPB11/RPC19 RNA polymerase subunit family. In terms of assembly, part of the RNA polymerase complex.

The protein localises to the cytoplasm. It carries out the reaction RNA(n) + a ribonucleoside 5'-triphosphate = RNA(n+1) + diphosphate. Functionally, DNA-dependent RNA polymerase (RNAP) catalyzes the transcription of DNA into RNA using the four ribonucleoside triphosphates as substrates. The sequence is that of DNA-directed RNA polymerase subunit Rpo11 from Methanococcus maripaludis (strain C5 / ATCC BAA-1333).